Consider the following 320-residue polypeptide: Acetyl-coenzyme A carboxylase carboxyl transferase subunit alpha (320 aa).

Positions 39–293 (ALDAKAAKLL…RGAIAAMLKE (255 aa)) constitute a CoA carboxyltransferase C-terminal domain.

This sequence belongs to the AccA family. As to quaternary structure, acetyl-CoA carboxylase is a heterohexamer composed of biotin carboxyl carrier protein (AccB), biotin carboxylase (AccC) and two subunits each of ACCase subunit alpha (AccA) and ACCase subunit beta (AccD).

The protein resides in the cytoplasm. The enzyme catalyses N(6)-carboxybiotinyl-L-lysyl-[protein] + acetyl-CoA = N(6)-biotinyl-L-lysyl-[protein] + malonyl-CoA. Its pathway is lipid metabolism; malonyl-CoA biosynthesis; malonyl-CoA from acetyl-CoA: step 1/1. Functionally, component of the acetyl coenzyme A carboxylase (ACC) complex. First, biotin carboxylase catalyzes the carboxylation of biotin on its carrier protein (BCCP) and then the CO(2) group is transferred by the carboxyltransferase to acetyl-CoA to form malonyl-CoA. The polypeptide is Acetyl-coenzyme A carboxylase carboxyl transferase subunit alpha (Ruegeria pomeroyi (strain ATCC 700808 / DSM 15171 / DSS-3) (Silicibacter pomeroyi)).